A 233-amino-acid polypeptide reads, in one-letter code: Inner kinetochore subunit fta4 (233 aa).

Threonine 189 and threonine 191 each carry phosphothreonine.

Belongs to the NKP1 family. In terms of assembly, component of the inner kinetochore constitutive centromere-associated network (CCAN) (also known as central kinetochore Sim4 complex in fission yeast), which is composed of at least cnl2, cnp3, cnp20, fta1, fta2, fta3, fta4, fta6, fta7, mal2, mhf1, mhf2, mis6, mis15, mis17, sim4 and wip1.

It localises to the nucleus. The protein resides in the chromosome. The protein localises to the centromere. It is found in the kinetochore. Its function is as follows. Component of the kinetochore, a multiprotein complex that assembles on centromeric DNA and attaches chromosomes to spindle microtubules, mediating chromosome segregation and sister chromatid segregation during meiosis and mitosis. Component of the inner kinetochore constitutive centromere-associated network (CCAN), which serves as a structural platform for outer kinetochore assembly. Fta2, fta3 and fta4 associate with the central core (cnt) and inner repeat (inr) region of the centromere. The sequence is that of Inner kinetochore subunit fta4 (fta4) from Schizosaccharomyces pombe (strain 972 / ATCC 24843) (Fission yeast).